The sequence spans 194 residues: Thymidylate kinase (194 aa).

7–14 (GVDCVGKS) contributes to the ATP binding site.

Belongs to the thymidylate kinase family.

The catalysed reaction is dTMP + ATP = dTDP + ADP. Its function is as follows. Phosphorylation of dTMP to form dTDP in both de novo and salvage pathways of dTTP synthesis. This is Thymidylate kinase from Campylobacter lari (strain RM2100 / D67 / ATCC BAA-1060).